The primary structure comprises 238 residues: MKVSLFVTCLVDMFQTNVGKATVEVLERLGCEVDFPEGQICCGQPAYNSGYVTDAKKAMKRMIAAFEEAEYVVSPSGSCTTMFREYPHLFQDDPKWAAKAQQLADKTYELTDFIVNVLGVEDVGAVLHKKATVHTSCHMTRLLGVSEEPMKLLRHVKGLELTALPGKHQCCGFGGTFSVKMAQISEQMVDEKVACVEDTEAEVLIGADCGCLMNIGGRLDRKDKNVRVMHIAEVLNSR.

This sequence belongs to the LutA/YkgE family.

Its function is as follows. Is involved in L-lactate degradation and allows cells to grow with lactate as the sole carbon source. This is Lactate utilization protein A from Bacillus velezensis (strain DSM 23117 / BGSC 10A6 / LMG 26770 / FZB42) (Bacillus amyloliquefaciens subsp. plantarum).